Here is a 278-residue protein sequence, read N- to C-terminus: Bis(5'-nucleosyl)-tetraphosphatase, symmetrical (278 aa).

Belongs to the Ap4A hydrolase family.

The enzyme catalyses P(1),P(4)-bis(5'-adenosyl) tetraphosphate + H2O = 2 ADP + 2 H(+). Its function is as follows. Hydrolyzes diadenosine 5',5'''-P1,P4-tetraphosphate to yield ADP. This is Bis(5'-nucleosyl)-tetraphosphatase, symmetrical from Methylococcus capsulatus (strain ATCC 33009 / NCIMB 11132 / Bath).